The primary structure comprises 189 residues: Peptidyl-tRNA hydrolase (189 aa).

Catalysis depends on H19, which acts as the Proton acceptor. 3 residues coordinate tRNA: Y64, N66, and N112.

It belongs to the PTH family. In terms of assembly, monomer.

Its subcellular location is the cytoplasm. It carries out the reaction an N-acyl-L-alpha-aminoacyl-tRNA + H2O = an N-acyl-L-amino acid + a tRNA + H(+). Functionally, hydrolyzes ribosome-free peptidyl-tRNAs (with 1 or more amino acids incorporated), which drop off the ribosome during protein synthesis, or as a result of ribosome stalling. Its function is as follows. Catalyzes the release of premature peptidyl moieties from peptidyl-tRNA molecules trapped in stalled 50S ribosomal subunits, and thus maintains levels of free tRNAs and 50S ribosomes. The sequence is that of Peptidyl-tRNA hydrolase from Gluconobacter oxydans (strain 621H) (Gluconobacter suboxydans).